The chain runs to 282 residues: Undecaprenyl-diphosphatase (282 aa).

Transmembrane regions (helical) follow at residues 1–21, 40–60, 89–109, 112–132, 153–173, 196–216, 228–248, and 258–278; these read MNLF…FLPI, GAAF…IYFA, WMIA…KHEI, VLRS…VLVV, LSWT…IPGS, FSFL…LYQT, LNLA…IAFL, and GIFI…IGTG.

The protein belongs to the UppP family.

Its subcellular location is the cell inner membrane. The catalysed reaction is di-trans,octa-cis-undecaprenyl diphosphate + H2O = di-trans,octa-cis-undecaprenyl phosphate + phosphate + H(+). Catalyzes the dephosphorylation of undecaprenyl diphosphate (UPP). Confers resistance to bacitracin. The polypeptide is Undecaprenyl-diphosphatase (Chlorobaculum tepidum (strain ATCC 49652 / DSM 12025 / NBRC 103806 / TLS) (Chlorobium tepidum)).